A 132-amino-acid polypeptide reads, in one-letter code: Aspartate 1-decarboxylase (132 aa).

The Schiff-base intermediate with substrate; via pyruvic acid role is filled by serine 25. Serine 25 bears the Pyruvic acid (Ser) mark. Threonine 57 serves as a coordination point for substrate. Catalysis depends on tyrosine 58, which acts as the Proton donor. 73–75 (GAA) is a substrate binding site.

This sequence belongs to the PanD family. Heterooctamer of four alpha and four beta subunits. The cofactor is pyruvate. Post-translationally, is synthesized initially as an inactive proenzyme, which is activated by self-cleavage at a specific serine bond to produce a beta-subunit with a hydroxyl group at its C-terminus and an alpha-subunit with a pyruvoyl group at its N-terminus.

Its subcellular location is the cytoplasm. The catalysed reaction is L-aspartate + H(+) = beta-alanine + CO2. It participates in cofactor biosynthesis; (R)-pantothenate biosynthesis; beta-alanine from L-aspartate: step 1/1. In terms of biological role, catalyzes the pyruvoyl-dependent decarboxylation of aspartate to produce beta-alanine. In Geotalea uraniireducens (strain Rf4) (Geobacter uraniireducens), this protein is Aspartate 1-decarboxylase.